The following is a 157-amino-acid chain: Ribosome maturation factor RimP (157 aa).

It belongs to the RimP family.

The protein resides in the cytoplasm. In terms of biological role, required for maturation of 30S ribosomal subunits. This Thermobifida fusca (strain YX) protein is Ribosome maturation factor RimP.